The chain runs to 223 residues: Small ribosomal subunit protein uS3 (223 aa).

The KH type-2 domain occupies 38–106 (LKRELKEKLK…EVFIDILEVN (69 aa)).

The protein belongs to the universal ribosomal protein uS3 family. Part of the 30S ribosomal subunit. Forms a tight complex with proteins S10 and S14.

In terms of biological role, binds the lower part of the 30S subunit head. Binds mRNA in the 70S ribosome, positioning it for translation. This chain is Small ribosomal subunit protein uS3, found in Acidobacterium capsulatum (strain ATCC 51196 / DSM 11244 / BCRC 80197 / JCM 7670 / NBRC 15755 / NCIMB 13165 / 161).